Here is a 95-residue protein sequence, read N- to C-terminus: Small ribosomal subunit protein bS6 (95 aa).

The protein belongs to the bacterial ribosomal protein bS6 family.

Binds together with bS18 to 16S ribosomal RNA. The chain is Small ribosomal subunit protein bS6 from Bacillus licheniformis (strain ATCC 14580 / DSM 13 / JCM 2505 / CCUG 7422 / NBRC 12200 / NCIMB 9375 / NCTC 10341 / NRRL NRS-1264 / Gibson 46).